The chain runs to 85 residues: Beta-insect depressant toxin BjIT2 (85 aa).

A signal peptide spans 1 to 21; sequence MKLLLLLVISASMLLECLVNA. An LCN-type CS-alpha/beta domain is found at 22-82; the sequence is DGYIRKKDGC…TWKSSTNTCG (61 aa). 4 disulfide bridges follow: cysteine 31–cysteine 81, cysteine 35–cysteine 56, cysteine 42–cysteine 63, and cysteine 46–cysteine 65. Positions 83 to 85 are cleaved as a propeptide — removed by a carboxypeptidase; the sequence is RKK.

The protein belongs to the long (4 C-C) scorpion toxin superfamily. Sodium channel inhibitor family. Beta subfamily. C-terminal basic residues are removed by a carboxypeptidase. As to expression, expressed by the venom gland.

The protein localises to the secreted. Depressant insect beta-toxins cause a transient contraction paralysis followed by a slow flaccid paralysis. They bind voltage-independently at site-4 of sodium channels (Nav) and shift the voltage of activation toward more negative potentials thereby affecting sodium channel activation and promoting spontaneous and repetitive firing. This toxin is active only on insects. This chain is Beta-insect depressant toxin BjIT2, found in Hottentotta judaicus (Black scorpion).